We begin with the raw amino-acid sequence, 170 residues long: MQLDEQRLRFRDAMASLSAAVNIITTEGDAGQCGITATAVCSVTDTPPSLMVCINANSAMNPVFQGNGKLCVNVLNHEQELMARHFAGMTGMAMEERFSLSCWQKGPLAQPVLKGSLASLEGEIRDVQAIGTHLVYLVEIKNIILSAEGHGLIYFKRRFHPVMLEMEAAI.

This sequence belongs to the non-flavoprotein flavin reductase family. HpaC subfamily. As to quaternary structure, homodimer. 4-HPA 3-monooxygenase consists of a reductase component HpaC and an oxygenase component HpaB.

The catalysed reaction is a reduced flavin + NAD(+) = an oxidized flavin + NADH + 2 H(+). The protein operates within aromatic compound metabolism; 4-hydroxyphenylacetate degradation; pyruvate and succinate semialdehyde from 4-hydroxyphenylacetate: step 1/7. Functionally, catalyzes the reduction of free flavins (FMN, FAD and riboflavin) by NADH. Subsequently, the reduced flavins diffuse to the large HpaB component or to other electron acceptors such as cytochrome c and Fe(3+) ion. This Escherichia coli protein is 4-hydroxyphenylacetate 3-monooxygenase reductase component (hpaC).